The primary structure comprises 258 residues: Translocon-associated protein subunit alpha (258 aa).

The first 24 residues, 1–24 (MMNLRVLFLALLLLASPLLQVARC), serve as a signal peptide directing secretion. Residues 25–190 (QSDAEDHSSL…ESGGLLSGES (166 aa)) lie on the Lumenal side of the membrane. N-linked (GlcNAc...) asparagine glycosylation is found at N57, N119, and N127. Residues 191–209 (VFLLTLGIGLLLLLGLWAY) traverse the membrane as a helical segment. At 210–258 (SQVQRLTKKTKKVSKVEVGTRSTEASLDEWLEGTTLAKTSSGKTKNKKN) the chain is on the cytoplasmic side.

The protein belongs to the TRAP-alpha family. In terms of assembly, heterotetramer of TRAP-alpha, TRAP-beta, TRAP-delta and TRAP-gamma. Phosphorylated in its cytoplasmic tail.

The protein localises to the endoplasmic reticulum membrane. In terms of biological role, TRAP proteins are part of a complex whose function is to bind calcium to the ER membrane and thereby regulate the retention of ER resident proteins. May be involved in the recycling of the translocation apparatus after completion of the translocation process or may function as a membrane-bound chaperone facilitating folding of translocated proteins. This is Translocon-associated protein subunit alpha from Arabidopsis thaliana (Mouse-ear cress).